A 535-amino-acid polypeptide reads, in one-letter code: Putative beta-glucosidase 41 (535 aa).

The signal sequence occupies residues 1–27 (MESLMRLVLVLFPFFVVFFVPLDHVSS). Gln49 contacts a beta-D-glucoside. Asn118 carries N-linked (GlcNAc...) asparagine glycosylation. A beta-D-glucoside-binding positions include His151 and 196–197 (NE). Glu197 functions as the Proton donor in the catalytic mechanism. Cys216 and Cys224 are joined by a disulfide. Positions 340 and 413 each coordinate a beta-D-glucoside. Glu413 (nucleophile) is an active-site residue. Residue Asn445 is glycosylated (N-linked (GlcNAc...) asparagine). A beta-D-glucoside-binding positions include Trp463, 470–471 (EW), and Phe479. Asn489 is a glycosylation site (N-linked (GlcNAc...) asparagine).

The protein belongs to the glycosyl hydrolase 1 family.

The catalysed reaction is Hydrolysis of terminal, non-reducing beta-D-glucosyl residues with release of beta-D-glucose.. The protein is Putative beta-glucosidase 41 of Arabidopsis thaliana (Mouse-ear cress).